The sequence spans 378 residues: Quinolinate synthase (378 aa).

2 residues coordinate iminosuccinate: histidine 59 and serine 80. Position 125 (cysteine 125) interacts with [4Fe-4S] cluster. Iminosuccinate-binding positions include 151-153 and serine 168; that span reads YAN. Cysteine 212 contributes to the [4Fe-4S] cluster binding site. Iminosuccinate-binding positions include 238 to 240 and threonine 255; that span reads HPE. Cysteine 309 contributes to the [4Fe-4S] cluster binding site.

Belongs to the quinolinate synthase family. Type 1 subfamily. [4Fe-4S] cluster serves as cofactor.

The protein resides in the cytoplasm. The catalysed reaction is iminosuccinate + dihydroxyacetone phosphate = quinolinate + phosphate + 2 H2O + H(+). It participates in cofactor biosynthesis; NAD(+) biosynthesis; quinolinate from iminoaspartate: step 1/1. Functionally, catalyzes the condensation of iminoaspartate with dihydroxyacetone phosphate to form quinolinate. This is Quinolinate synthase from Burkholderia cenocepacia (strain HI2424).